The primary structure comprises 410 residues: Lissencephaly-1 homolog (410 aa).

The 33-residue stretch at 7-39 folds into the LisH domain; it reads QQEELQLAVHAYLVEAGHAEAAAAMAKSANLGD. The stretch at 55–80 forms a coiled coil; the sequence is TTITRLQKRNMELQAEVEELRSSARA. WD repeat units follow at residues 104–143, 146–185, 188–227, 230–269, 294–333, 336–375, and 378–410; these read GHRLPITAVAIHPSFAVMASASEDASIKLWDMESGNFERS, GHTNAVNDIAYDREGNRLVSCSTDMTIKVWNMDNFTCTKT, GHDHTVSSVRFDHTGDRVFSASRDKTIKIWELATGYCLQT, GHSDWVRSIDVSADGAWICSASSDHTVRVWSVASGECKHV, MIFGSKPSAEAASKGPFVASASRDKSICLFDVSTGQHLAR, GHDNWVRATAWSRGGRYLFSVADDKTMRVWDIATKRVSKT, and AHNHFVSCIAVHAKNTHVVTGSVDLKVKVWECN.

Belongs to the WD repeat LIS1/nudF family.

Its subcellular location is the cytoplasm. The protein resides in the cytoskeleton. It is found in the microtubule organizing center. The protein localises to the centrosome. Positively regulates the activity of the minus-end directed microtubule motor protein dynein. May enhance dynein-mediated microtubule sliding by targeting dynein to the microtubule plus end. Required for several dynein- and microtubule-dependent processes. In Monosiga brevicollis (Choanoflagellate), this protein is Lissencephaly-1 homolog.